Here is a 205-residue protein sequence, read N- to C-terminus: MRYTSGAIETLIDEFARLPGIGRKTAQRLCMHMLNEPRTAAEKLAKALLDVKDRVIRCSECQNVTDRDSDPCVLCRSSGRDRTVICVVESPVDLLAFEKTGHYKGLYHVLHGVISPLDGIGPDDIKVRELLARVSRPEESLQVREVVLALNPTVEGETTSLYISRLLKPLGIAVSKIARGIPVGAELEFIDEATLSRAMEGRSAM.

The C4-type zinc-finger motif lies at 58–75 (CSECQNVTDRDSDPCVLC). In terms of domain architecture, Toprim spans 83-182 (TVICVVESPV…AVSKIARGIP (100 aa)).

It belongs to the RecR family.

Functionally, may play a role in DNA repair. It seems to be involved in an RecBC-independent recombinational process of DNA repair. It may act with RecF and RecO. The sequence is that of Recombination protein RecR from Chlorobium phaeobacteroides (strain DSM 266 / SMG 266 / 2430).